We begin with the raw amino-acid sequence, 193 residues long: MAFELPPLPYEKNALEPHISAETLEYHHDKHHNTYVVNLNNLIPGTEFEGKSLEEIVKSSSGGIFNNAAQVWNHTFYWNCLSPNGGGQPTGALADAINAAFGSFDKFKEEFTKTSVGTFGSGWGWLVKKADGSLALASTIGAGNPLTSGDTPLLTCDVWEHAYYIDYRNLRPKYVEAFWNLVNWDFVAKNFAA.

The Fe cation site is built by His27, His74, Asp157, and His161.

The protein belongs to the iron/manganese superoxide dismutase family. As to quaternary structure, homodimer. It depends on Fe cation as a cofactor.

It carries out the reaction 2 superoxide + 2 H(+) = H2O2 + O2. Its function is as follows. Destroys superoxide anion radicals which are normally produced within the cells and which are toxic to biological systems. Partially complements double sodA-sodB deletions in E.coli. The protein is Superoxide dismutase [Fe] of Pseudomonas aeruginosa (strain ATCC 15692 / DSM 22644 / CIP 104116 / JCM 14847 / LMG 12228 / 1C / PRS 101 / PAO1).